Consider the following 75-residue polypeptide: Antimicrobial peptide Meucin-49-1 (75 aa).

A signal peptide spans 1 to 22; the sequence is MNKKILLVIFIVTMLIVDEVNS.

This sequence belongs to the non-disulfide-bridged peptide (NDBP) superfamily. Long chain multifunctional peptide (group 2) family. As to expression, expressed by the venom gland.

It localises to the secreted. In terms of biological role, antimicrobial peptide. The sequence is that of Antimicrobial peptide Meucin-49-1 from Mesobuthus eupeus (Lesser Asian scorpion).